The sequence spans 192 residues: Fe/S biogenesis protein NfuA (192 aa).

Residues cysteine 149 and cysteine 152 each contribute to the [4Fe-4S] cluster site.

The protein belongs to the NfuA family. As to quaternary structure, homodimer. The cofactor is [4Fe-4S] cluster.

Functionally, involved in iron-sulfur cluster biogenesis. Binds a 4Fe-4S cluster, can transfer this cluster to apoproteins, and thereby intervenes in the maturation of Fe/S proteins. Could also act as a scaffold/chaperone for damaged Fe/S proteins. This chain is Fe/S biogenesis protein NfuA, found in Shewanella oneidensis (strain ATCC 700550 / JCM 31522 / CIP 106686 / LMG 19005 / NCIMB 14063 / MR-1).